Here is a 187-residue protein sequence, read N- to C-terminus: Adenylate kinase (187 aa).

10–15 (GSGKGT) serves as a coordination point for ATP. Residues 30 to 59 (STGDLLRAEVAAGSPLGLKAKEVMARGDLV) form an NMP region. Residues T31, R36, 57–59 (DLV), 85–88 (GYPR), and Q92 contribute to the AMP site. The interval 126–136 (GRAKAEGREDD) is LID. An ATP-binding site is contributed by R127. Positions 133 and 144 each coordinate AMP. G172 provides a ligand contact to ATP.

Belongs to the adenylate kinase family. Monomer.

It is found in the cytoplasm. It catalyses the reaction AMP + ATP = 2 ADP. Its pathway is purine metabolism; AMP biosynthesis via salvage pathway; AMP from ADP: step 1/1. Its function is as follows. Catalyzes the reversible transfer of the terminal phosphate group between ATP and AMP. Plays an important role in cellular energy homeostasis and in adenine nucleotide metabolism. This is Adenylate kinase from Xanthomonas oryzae pv. oryzae (strain MAFF 311018).